The chain runs to 106 residues: NADH-quinone oxidoreductase subunit K (106 aa).

The next 3 helical transmembrane spans lie at 10–30 (IHYY…GVMV), 35–55 (VLIF…FVTF), and 67–87 (VVFF…AIVI).

It belongs to the complex I subunit 4L family. In terms of assembly, NDH-1 is composed of 14 different subunits. Subunits NuoA, H, J, K, L, M, N constitute the membrane sector of the complex.

The protein resides in the cell inner membrane. The enzyme catalyses a quinone + NADH + 5 H(+)(in) = a quinol + NAD(+) + 4 H(+)(out). Functionally, NDH-1 shuttles electrons from NADH, via FMN and iron-sulfur (Fe-S) centers, to quinones in the respiratory chain. The immediate electron acceptor for the enzyme in this species is believed to be ubiquinone. Couples the redox reaction to proton translocation (for every two electrons transferred, four hydrogen ions are translocated across the cytoplasmic membrane), and thus conserves the redox energy in a proton gradient. The chain is NADH-quinone oxidoreductase subunit K from Leptospira borgpetersenii serovar Hardjo-bovis (strain JB197).